The sequence spans 812 residues: Glycerol-3-phosphate acyltransferase (812 aa).

An HXXXXD motif motif is present at residues 308 to 313 (CHRSHM).

Belongs to the GPAT/DAPAT family.

The protein resides in the cell inner membrane. The enzyme catalyses sn-glycerol 3-phosphate + an acyl-CoA = a 1-acyl-sn-glycero-3-phosphate + CoA. Its pathway is phospholipid metabolism; CDP-diacylglycerol biosynthesis; CDP-diacylglycerol from sn-glycerol 3-phosphate: step 1/3. This is Glycerol-3-phosphate acyltransferase from Pseudoalteromonas translucida (strain TAC 125).